The chain runs to 230 residues: Ribonuclease 3 (230 aa).

Residues 6 to 135 (VSELRARYGI…FNGALFLDQG (130 aa)) form the RNase III domain. Residue Glu48 coordinates Mg(2+). The active site involves Asp52. Mg(2+) is bound by residues Asp121 and Glu124. Glu124 is an active-site residue. The 70-residue stretch at 161 to 230 (DYKTNLQEFL…AKKALEQLKA (70 aa)) folds into the DRBM domain.

The protein belongs to the ribonuclease III family. Homodimer. The cofactor is Mg(2+).

It localises to the cytoplasm. The enzyme catalyses Endonucleolytic cleavage to 5'-phosphomonoester.. Digests double-stranded RNA. Involved in the processing of primary rRNA transcript to yield the immediate precursors to the large and small rRNAs (23S and 16S). Processes some mRNAs, and tRNAs when they are encoded in the rRNA operon. Processes pre-crRNA and tracrRNA of type II CRISPR loci if present in the organism. This is Ribonuclease 3 from Latilactobacillus sakei subsp. sakei (strain 23K) (Lactobacillus sakei subsp. sakei).